Reading from the N-terminus, the 202-residue chain is Recoverin (202 aa).

Gly2 carries N-myristoyl glycine lipidation. Cys39 carries the cysteine sulfenic acid (-SOH) modification. EF-hand domains are found at residues 41–59 (SGRI…FFPD), 61–96 (DPKA…TTAG), 97–132 (KPTQ…IFKM), and 147–182 (TPEK…NKEI). Ca(2+)-binding residues include Asp74, Asn76, Asp78, Thr80, Glu85, Asp110, Asp112, Asn114, Thr116, and Glu121. Positions 189–192 (EPQK) are interaction with GRK1.

It belongs to the recoverin family. Homodimer; disulfide-linked. Homodimerization is caused by prolonged intense illumination. May form a complex composed of RHO, GRK1 and RCVRN in a Ca(2+)-dependent manner; RCVRN prevents the interaction between GRK1 and RHO. Interacts (via C-terminus) with GRK1 (via N-terminus); the interaction is Ca(2+)-dependent. Post-translationally, the N-terminal glycine is linked to one of four different types of acyl groups. The most abundant is myristoleate (14:1), but 14:0, 14:2, and 12:0 acyl residues are also present. The Ca(2+) induced exposure of the myristoyl group, known as the calcium-myristoyl switch, promotes RCVRN binding to the photoreceptor cell membranes only when intracellular Ca(2+) concentration is high. In terms of processing, oxidation on Cys-39 occurs in response to prolonged intense illumination and results in the formation of disulfide homodimers, and to a lesser extent disulfide-linked heterodimers. As to expression, expressed in rod photoreceptors in the retina (at protein level).

The protein localises to the photoreceptor inner segment. The protein resides in the cell projection. Its subcellular location is the cilium. It localises to the photoreceptor outer segment. It is found in the photoreceptor outer segment membrane. The protein localises to the perikaryon. Its function is as follows. Acts as a calcium sensor and regulates phototransduction of cone and rod photoreceptor cells. Modulates light sensitivity of cone photoreceptor in dark and dim conditions. In response to high Ca(2+) levels induced by low light levels, prolongs RHO/rhodopsin activation in rod photoreceptor cells by binding to and inhibiting GRK1-mediated phosphorylation of RHO/rhodopsin. Plays a role in scotopic vision/enhances vision in dim light by enhancing signal transfer between rod photoreceptors and rod bipolar cells. Improves rod photoreceptor sensitivity in dim light and mediates response of rod photoreceptors to facilitate detection of change and motion in bright light. The sequence is that of Recoverin (Rcvrn) from Mus musculus (Mouse).